A 374-amino-acid chain; its full sequence is MPLLTTPYAELDLIRQPEQANDPLQAFDAADEYLLAQLHDQAPDANCRVLVLNDSFGALAASLAGQLQVVSSGDSHLGHLALEKNLARNGLPFDSVPFVPASEHWQGPFDRVLVRVPKTLALLEEQLIRLQGQLAPGAQVIAGAMIKHLPRAAGDLMEKYIGPVQASLALKKARLLTATVAERPLAKSPYPSCYRLDVPALDLINHANVFCREGLDIGTRAFLPHLPRDLGRARVADLGCGNGVLAIASALANPEAEYTLVDESYMAVQSAQENWLAALGERPATFFAADGLAGLEKQSLDVVLCNPPFHQQQVVGDFLAWRMFQQAREALVVGGALYIVGNRHLGYHSKLARLFRGVEQVAATPKFVILKARK.

This sequence belongs to the methyltransferase superfamily. RlmG family.

It is found in the cytoplasm. It carries out the reaction guanosine(1835) in 23S rRNA + S-adenosyl-L-methionine = N(2)-methylguanosine(1835) in 23S rRNA + S-adenosyl-L-homocysteine + H(+). In terms of biological role, specifically methylates the guanine in position 1835 (m2G1835) of 23S rRNA. This chain is Ribosomal RNA large subunit methyltransferase G, found in Pseudomonas putida (strain ATCC 700007 / DSM 6899 / JCM 31910 / BCRC 17059 / LMG 24140 / F1).